We begin with the raw amino-acid sequence, 500 residues long: Glycerol kinase (500 aa).

Position 13 (Thr13) interacts with ADP. Residues Thr13, Thr14, and Ser15 each coordinate ATP. Thr13 serves as a coordination point for sn-glycerol 3-phosphate. Residue Arg17 coordinates ADP. Sn-glycerol 3-phosphate-binding residues include Arg83, Glu84, Tyr135, and Asp244. Glycerol contacts are provided by Arg83, Glu84, Tyr135, Asp244, and Gln245. 2 residues coordinate ADP: Thr266 and Gly309. 4 residues coordinate ATP: Thr266, Gly309, Gln313, and Gly410. ADP-binding residues include Gly410 and Asn414.

This sequence belongs to the FGGY kinase family.

It carries out the reaction glycerol + ATP = sn-glycerol 3-phosphate + ADP + H(+). It participates in polyol metabolism; glycerol degradation via glycerol kinase pathway; sn-glycerol 3-phosphate from glycerol: step 1/1. Its activity is regulated as follows. Inhibited by fructose 1,6-bisphosphate (FBP). Key enzyme in the regulation of glycerol uptake and metabolism. Catalyzes the phosphorylation of glycerol to yield sn-glycerol 3-phosphate. The protein is Glycerol kinase of Burkholderia vietnamiensis (strain G4 / LMG 22486) (Burkholderia cepacia (strain R1808)).